The sequence spans 230 residues: MDLDILKQTAARRAVELVEDGMVVGLGTGSTAAFAVSVLAERVRLGLRVVGIPTSERTARQAEAEGIVLGTLAEQSRVDLTIDGADEVALGELALIKGLGGALLREKIVAAASERLIIIVDATKLVEQLGSHGPLPVEVAPFGWQATARALERLGAEVNLRAQHGQAFLTDGGHYILDCRFGPIARPAELEAAIDRIPGVVESGLFVGMASAVIVADEGGIEVLTPSAAP.

Substrate-binding positions include 28 to 31, 83 to 86, and 97 to 100; these read TGST, DGAD, and KGLG. Glu106 serves as the catalytic Proton acceptor. Lys124 provides a ligand contact to substrate.

It belongs to the ribose 5-phosphate isomerase family. In terms of assembly, homodimer.

The catalysed reaction is aldehydo-D-ribose 5-phosphate = D-ribulose 5-phosphate. The protein operates within carbohydrate degradation; pentose phosphate pathway; D-ribose 5-phosphate from D-ribulose 5-phosphate (non-oxidative stage): step 1/1. Catalyzes the reversible conversion of ribose-5-phosphate to ribulose 5-phosphate. In Gloeobacter violaceus (strain ATCC 29082 / PCC 7421), this protein is Ribose-5-phosphate isomerase A.